The following is a 146-amino-acid chain: Hemoglobin subunit beta (146 aa).

Val-1 carries the N-acetylvaline modification. The Globin domain occupies 2-146; the sequence is HLTADEKVSL…VANALAHKYH (145 aa). Ser-44 bears the Phosphoserine mark. At Lys-59 the chain carries N6-acetyllysine. Position 63 (His-63) interacts with heme b. Lys-82 is modified (N6-acetyllysine). Residue His-92 coordinates heme b. Cys-93 carries the post-translational modification S-nitrosocysteine. The residue at position 144 (Lys-144) is an N6-acetyllysine.

Belongs to the globin family. In terms of assembly, heterotetramer of two alpha chains and two beta chains. In terms of tissue distribution, red blood cells.

Its function is as follows. Involved in oxygen transport from the lung to the various peripheral tissues. The protein is Hemoglobin subunit beta of Tamias striatus (Eastern chipmunk).